The following is a 318-amino-acid chain: Malate dehydrogenase (318 aa).

NAD(+) contacts are provided by residues 10 to 15 and Asp-34; that span reads GGGQIG. Substrate contacts are provided by Arg-83 and Arg-89. NAD(+) is bound by residues Asn-96 and 119–121; that span reads LSN. Substrate-binding residues include Asn-121 and Arg-152. His-176 acts as the Proton acceptor in catalysis.

This sequence belongs to the LDH/MDH superfamily. MDH type 3 family.

It catalyses the reaction (S)-malate + NAD(+) = oxaloacetate + NADH + H(+). Its function is as follows. Catalyzes the reversible oxidation of malate to oxaloacetate. The polypeptide is Malate dehydrogenase (Syntrophotalea carbinolica (strain DSM 2380 / NBRC 103641 / GraBd1) (Pelobacter carbinolicus)).